Reading from the N-terminus, the 188-residue chain is Inactive cysteine S-methyltransferase OspZ (188 aa).

This sequence belongs to the NleE/OspZ family.

Its subcellular location is the secreted. It localises to the host cytoplasm. The protein localises to the host nucleus. In terms of biological role, inactive effector protein: in contrast to other members of the family, does not have the ability to inhibit host cell NF-kappa-B activation. Probably lacks cysteine S-methyltransferase activity due to its inability to bind S-adenosyl-L-methionine at the C-terminus. In Shigella flexneri, this protein is Inactive cysteine S-methyltransferase OspZ.